Reading from the N-terminus, the 164-residue chain is General odorant-binding protein 1 (164 aa).

The N-terminal stretch at 1–18 (MWKLVVVLTVNLLQGALT) is a signal peptide. Disulfide bonds link C37-C72, C68-C126, and C115-C135.

It belongs to the PBP/GOBP family. As to quaternary structure, homodimer. In terms of tissue distribution, antenna.

Its function is as follows. Present in the aqueous fluid surrounding olfactory sensory dendrites and are thought to aid in the capture and transport of hydrophobic odorants into and through this fluid. This Bombyx mori (Silk moth) protein is General odorant-binding protein 1.